A 1589-amino-acid polypeptide reads, in one-letter code: Pentafunctional AROM polypeptide (1589 aa).

The 3-dehydroquinate synthase stretch occupies residues 1-384 (MAAPTTIKIL…HEQQASVVSN (384 aa)). NAD(+) contacts are provided by residues 44–46 (DTT), 81–84 (ELSK), 114–116 (GGV), and Asp119. Residue Arg130 coordinates 7-phospho-2-dehydro-3-deoxy-D-arabino-heptonate. 139-140 (TT) contacts NAD(+). 7-phospho-2-dehydro-3-deoxy-D-arabino-heptonate is bound by residues Asp146 and Lys152. Lys161 serves as a coordination point for NAD(+). Asn162 serves as a coordination point for 7-phospho-2-dehydro-3-deoxy-D-arabino-heptonate. NAD(+) is bound by residues 179–182 (FLNT) and Asn190. Glu194 lines the Zn(2+) pocket. 7-phospho-2-dehydro-3-deoxy-D-arabino-heptonate-binding positions include 194 to 197 (EVIK) and Lys250. Residue Glu260 is the Proton acceptor; for 3-dehydroquinate synthase activity of the active site. Residues 264–268 (RNLLN) and His271 contribute to the 7-phospho-2-dehydro-3-deoxy-D-arabino-heptonate site. His271 serves as a coordination point for Zn(2+). The Proton acceptor; for 3-dehydroquinate synthase activity role is filled by His275. 2 residues coordinate 7-phospho-2-dehydro-3-deoxy-D-arabino-heptonate: His287 and Lys356. His287 is a binding site for Zn(2+). An EPSP synthase region spans residues 397-841 (VSPGVPKSLQ…WDTLAQLFKA (445 aa)). The active-site For EPSP synthase activity is Cys823. The segment at 861–1052 (ASIFIIGMRG…KKKPQSFFVS (192 aa)) is shikimate kinase. 867–874 (GMRGAGKT) contacts ATP. The tract at residues 1053–1273 (LTLPDLRPSA…AAPGQLSAQD (221 aa)) is 3-dehydroquinase. The active-site Proton acceptor; for 3-dehydroquinate dehydratase activity is His1176. Lys1204 functions as the Schiff-base intermediate with substrate; for 3-dehydroquinate dehydratase activity in the catalytic mechanism. The interval 1286 to 1589 (PRKFAIFGKP…VMNPGTDNRG (304 aa)) is shikimate dehydrogenase.

In the N-terminal section; belongs to the sugar phosphate cyclases superfamily. Dehydroquinate synthase family. This sequence in the 2nd section; belongs to the EPSP synthase family. It in the 3rd section; belongs to the shikimate kinase family. The protein in the 4th section; belongs to the type-I 3-dehydroquinase family. In the C-terminal section; belongs to the shikimate dehydrogenase family. As to quaternary structure, homodimer. Zn(2+) is required as a cofactor.

It is found in the cytoplasm. The enzyme catalyses 7-phospho-2-dehydro-3-deoxy-D-arabino-heptonate = 3-dehydroquinate + phosphate. The catalysed reaction is 3-dehydroquinate = 3-dehydroshikimate + H2O. It carries out the reaction shikimate + NADP(+) = 3-dehydroshikimate + NADPH + H(+). It catalyses the reaction shikimate + ATP = 3-phosphoshikimate + ADP + H(+). The enzyme catalyses 3-phosphoshikimate + phosphoenolpyruvate = 5-O-(1-carboxyvinyl)-3-phosphoshikimate + phosphate. It participates in metabolic intermediate biosynthesis; chorismate biosynthesis; chorismate from D-erythrose 4-phosphate and phosphoenolpyruvate: step 2/7. The protein operates within metabolic intermediate biosynthesis; chorismate biosynthesis; chorismate from D-erythrose 4-phosphate and phosphoenolpyruvate: step 3/7. It functions in the pathway metabolic intermediate biosynthesis; chorismate biosynthesis; chorismate from D-erythrose 4-phosphate and phosphoenolpyruvate: step 4/7. Its pathway is metabolic intermediate biosynthesis; chorismate biosynthesis; chorismate from D-erythrose 4-phosphate and phosphoenolpyruvate: step 5/7. It participates in metabolic intermediate biosynthesis; chorismate biosynthesis; chorismate from D-erythrose 4-phosphate and phosphoenolpyruvate: step 6/7. The AROM polypeptide catalyzes 5 consecutive enzymatic reactions in prechorismate polyaromatic amino acid biosynthesis. The protein is Pentafunctional AROM polypeptide of Coccidioides posadasii (strain C735) (Valley fever fungus).